The primary structure comprises 501 residues: 4,4'-diapophytoene desaturase (4,4'-diaponeurosporene-forming) (501 aa).

FAD is bound at residue 5–17 (VVGAGVTGLAAAA).

This sequence belongs to the carotenoid/retinoid oxidoreductase family. CrtN subfamily.

It carries out the reaction 15-cis-4,4'-diapophytoene + 3 FAD + 3 H(+) = all-trans-4,4'-diaponeurosporene + 3 FADH2. Its pathway is carotenoid biosynthesis; staphyloxanthin biosynthesis; staphyloxanthin from farnesyl diphosphate: step 2/5. Its function is as follows. Involved in the biosynthesis of the yellow-orange carotenoid staphyloxanthin, which plays a role in the virulence via its protective function against oxidative stress. Catalyzes three successive dehydrogenation reactions that lead to the introduction of three double bonds into 4,4'-diapophytoene (dehydrosqualene), with 4,4'-diapophytofluene and 4,4'-diapo-zeta-carotene as intermediates, and 4,4'-diaponeurosporene (the major deep-yellow pigment in staphylococci strains) as the end product. This Staphylococcus haemolyticus (strain JCSC1435) protein is 4,4'-diapophytoene desaturase (4,4'-diaponeurosporene-forming).